The sequence spans 312 residues: DNA primase small subunit PriS (312 aa).

Catalysis depends on residues Asp-88, Asp-90, and Asp-215.

Belongs to the eukaryotic-type primase small subunit family. Heterodimer of a small subunit (PriS) and a large subunit (PriL). The cofactor is Mg(2+). Mn(2+) serves as cofactor.

Its function is as follows. Catalytic subunit of DNA primase, an RNA polymerase that catalyzes the synthesis of short RNA molecules used as primers for DNA polymerase during DNA replication. The small subunit contains the primase catalytic core and has DNA synthesis activity on its own. Binding to the large subunit stabilizes and modulates the activity, increasing the rate of DNA synthesis while decreasing the length of the DNA fragments, and conferring RNA synthesis capability. The DNA polymerase activity may enable DNA primase to also catalyze primer extension after primer synthesis. May also play a role in DNA repair. This chain is DNA primase small subunit PriS, found in Pyrobaculum aerophilum (strain ATCC 51768 / DSM 7523 / JCM 9630 / CIP 104966 / NBRC 100827 / IM2).